Consider the following 237-residue polypeptide: Leucyl/phenylalanyl-tRNA--protein transferase (237 aa).

The protein belongs to the L/F-transferase family.

It is found in the cytoplasm. It catalyses the reaction N-terminal L-lysyl-[protein] + L-leucyl-tRNA(Leu) = N-terminal L-leucyl-L-lysyl-[protein] + tRNA(Leu) + H(+). It carries out the reaction N-terminal L-arginyl-[protein] + L-leucyl-tRNA(Leu) = N-terminal L-leucyl-L-arginyl-[protein] + tRNA(Leu) + H(+). The enzyme catalyses L-phenylalanyl-tRNA(Phe) + an N-terminal L-alpha-aminoacyl-[protein] = an N-terminal L-phenylalanyl-L-alpha-aminoacyl-[protein] + tRNA(Phe). Its function is as follows. Functions in the N-end rule pathway of protein degradation where it conjugates Leu, Phe and, less efficiently, Met from aminoacyl-tRNAs to the N-termini of proteins containing an N-terminal arginine or lysine. The polypeptide is Leucyl/phenylalanyl-tRNA--protein transferase (Shewanella baltica (strain OS223)).